We begin with the raw amino-acid sequence, 165 residues long: Large ribosomal subunit protein uL10 (165 aa).

This sequence belongs to the universal ribosomal protein uL10 family. As to quaternary structure, part of the ribosomal stalk of the 50S ribosomal subunit. The N-terminus interacts with L11 and the large rRNA to form the base of the stalk. The C-terminus forms an elongated spine to which L12 dimers bind in a sequential fashion forming a multimeric L10(L12)X complex.

Functionally, forms part of the ribosomal stalk, playing a central role in the interaction of the ribosome with GTP-bound translation factors. In Sodalis glossinidius (strain morsitans), this protein is Large ribosomal subunit protein uL10.